A 1209-amino-acid chain; its full sequence is Phospholipid-transporting ATPase ID (1209 aa).

The Cytoplasmic segment spans residues M1–L68. Residues A12–R36 are disordered. A helical membrane pass occupies residues F69–I89. Topologically, residues P90–Q91 are exoplasmic loop. Residues I92–A112 traverse the membrane as a helical segment. Residues V113–L295 are Cytoplasmic-facing. Residues V296–I316 traverse the membrane as a helical segment. Residues W317–A338 lie on the Exoplasmic loop side of the membrane. The helical transmembrane segment at F339–I359 threads the bilayer. Residues S360–N898 are Cytoplasmic-facing. D411 acts as the 4-aspartylphosphate intermediate in catalysis. ATP contacts are provided by D411, K412, T413, E515, F556, K579, R613, T693, G694, D695, R807, and K813. Residue D411 coordinates Mg(2+). Residue T413 participates in Mg(2+) binding. A Mg(2+)-binding site is contributed by D833. ATP is bound by residues N836 and D837. Residue D837 participates in Mg(2+) binding. A helical membrane pass occupies residues F899–V919. Residues Y920–Q922 lie on the Exoplasmic loop side of the membrane. Residues Y923 to F943 form a helical membrane-spanning segment. Residues D944 to E972 lie on the Cytoplasmic side of the membrane. A helical membrane pass occupies residues F973–G993. At V994–S1011 the chain is on the exoplasmic loop side. Residues F1012 to T1032 form a helical membrane-spanning segment. The Cytoplasmic segment spans residues G1033–T1036. A helical membrane pass occupies residues A1037–M1057. Topologically, residues H1058–Q1082 are exoplasmic loop. Residues P1083–F1103 traverse the membrane as a helical segment. Residues R1104 to G1209 are Cytoplasmic-facing. S1175 is subject to Phosphoserine. The interval R1179–G1209 is disordered.

This sequence belongs to the cation transport ATPase (P-type) (TC 3.A.3) family. Type IV subfamily. In terms of assembly, component of a P4-ATPase flippase complex which consists of a catalytic alpha subunit ATP8B2 and an accessory beta subunit TMEM30A or TMEM30B. The cofactor is Mg(2+). In terms of tissue distribution, expressed in brain and testes (at protein level).

It localises to the cell membrane. Its subcellular location is the endoplasmic reticulum membrane. The enzyme catalyses ATP + H2O + phospholipidSide 1 = ADP + phosphate + phospholipidSide 2.. The catalysed reaction is a 1,2-diacyl-sn-glycero-3-phosphocholine(out) + ATP + H2O = a 1,2-diacyl-sn-glycero-3-phosphocholine(in) + ADP + phosphate + H(+). Functionally, catalytic component of P4-ATPase flippase complex, which catalyzes the hydrolysis of ATP coupled to the transport of phosphatidylcholine (PC) from the outer to the inner leaflet of the plasma membrane. May contribute to the maintenance of membrane lipid asymmetry. This is Phospholipid-transporting ATPase ID from Mus musculus (Mouse).